The primary structure comprises 180 residues: ADP ribosylation factor 4 (180 aa).

Glycine 2 carries N-myristoyl glycine lipidation. Residues 24–31 (GLDAAGKT), 67–71 (DVGGQ), and 126–129 (NKQD) each bind GTP.

The protein belongs to the small GTPase superfamily. Arf family. Uniformly distributed throughout adults.

It is found in the golgi apparatus. In terms of biological role, GTP-binding protein involved in protein trafficking; may modulate vesicle budding and uncoating within the Golgi apparatus. In Drosophila melanogaster (Fruit fly), this protein is ADP ribosylation factor 4.